Consider the following 340-residue polypeptide: Phosphoribosylformylglycinamidine cyclo-ligase (340 aa).

Belongs to the AIR synthase family.

It localises to the cytoplasm. It carries out the reaction 2-formamido-N(1)-(5-O-phospho-beta-D-ribosyl)acetamidine + ATP = 5-amino-1-(5-phospho-beta-D-ribosyl)imidazole + ADP + phosphate + H(+). It functions in the pathway purine metabolism; IMP biosynthesis via de novo pathway; 5-amino-1-(5-phospho-D-ribosyl)imidazole from N(2)-formyl-N(1)-(5-phospho-D-ribosyl)glycinamide: step 2/2. In Streptococcus pneumoniae (strain CGSP14), this protein is Phosphoribosylformylglycinamidine cyclo-ligase.